The primary structure comprises 506 residues: Histidine ammonia-lyase (506 aa).

The 5-imidazolinone (Ala-Gly) cross-link spans 143-145 (ASG). Ser-144 is subject to 2,3-didehydroalanine (Ser).

Belongs to the PAL/histidase family. In terms of processing, contains an active site 4-methylidene-imidazol-5-one (MIO), which is formed autocatalytically by cyclization and dehydration of residues Ala-Ser-Gly.

Its subcellular location is the cytoplasm. The enzyme catalyses L-histidine = trans-urocanate + NH4(+). The protein operates within amino-acid degradation; L-histidine degradation into L-glutamate; N-formimidoyl-L-glutamate from L-histidine: step 1/3. The polypeptide is Histidine ammonia-lyase (Salmonella paratyphi A (strain ATCC 9150 / SARB42)).